Reading from the N-terminus, the 130-residue chain is RutC family protein HI_0719 (130 aa).

Cysteine 109 is an active-site residue.

It belongs to the RutC family. In terms of assembly, homotrimer.

In Haemophilus influenzae (strain ATCC 51907 / DSM 11121 / KW20 / Rd), this protein is RutC family protein HI_0719.